Reading from the N-terminus, the 122-residue chain is Large ribosomal subunit protein uL14 (122 aa).

This sequence belongs to the universal ribosomal protein uL14 family. In terms of assembly, part of the 50S ribosomal subunit. Forms a cluster with proteins L3 and L19. In the 70S ribosome, L14 and L19 interact and together make contacts with the 16S rRNA in bridges B5 and B8.

In terms of biological role, binds to 23S rRNA. Forms part of two intersubunit bridges in the 70S ribosome. In Citrifermentans bemidjiense (strain ATCC BAA-1014 / DSM 16622 / JCM 12645 / Bem) (Geobacter bemidjiensis), this protein is Large ribosomal subunit protein uL14.